Here is a 382-residue protein sequence, read N- to C-terminus: MTFSVVIVAAGSGTRAGPGQAKQWRVLAGRPVLRWSVEAFLAAGAAEVVVVTTADGEAFLPRMLEGLQGWRSTLGGATRALSVQAGLAALSERPGAEPVMIHDAARPFVSRNVILALLGALSDADLALPALAVADTLKRQPTGEAAQTVSREHLWRAQTPQAARRDTLIAAYAAWTHGEPTDDAQVVEAAGGRIALTAGDPLLTKLTYPEDFAMAEHLAGVARVTRVGQGFDAHRWGPGEEVWLCGVAIKHDETLVGHSDADAGLHALTDAILGAIGEGDIGDHFPPTDPKWKGAASDQFLKHAVDLVTAKGGALVNVDVTLICERPKIKPHRQAMRERLAEILSIPVDRVSVKATTTEKMGFTGRGEGLAASAVVAVETPA.

A 2-C-methyl-D-erythritol 4-phosphate cytidylyltransferase region spans residues 1-225 (MTFSVVIVAA…EHLAGVARVT (225 aa)). Residues 226–382 (RVGQGFDAHR…SAVVAVETPA (157 aa)) are 2-C-methyl-D-erythritol 2,4-cyclodiphosphate synthase. Aspartate 232 and histidine 234 together coordinate a divalent metal cation. 4-CDP-2-C-methyl-D-erythritol 2-phosphate is bound by residues 232 to 234 (DAH) and 258 to 259 (HS). Histidine 266 lines the a divalent metal cation pocket. Residues 280-282 (DIG), 356-359 (TTTE), phenylalanine 363, and arginine 366 contribute to the 4-CDP-2-C-methyl-D-erythritol 2-phosphate site.

In the N-terminal section; belongs to the IspD/TarI cytidylyltransferase family. IspD subfamily. The protein in the C-terminal section; belongs to the IspF family. A divalent metal cation is required as a cofactor.

It catalyses the reaction 2-C-methyl-D-erythritol 4-phosphate + CTP + H(+) = 4-CDP-2-C-methyl-D-erythritol + diphosphate. The enzyme catalyses 4-CDP-2-C-methyl-D-erythritol 2-phosphate = 2-C-methyl-D-erythritol 2,4-cyclic diphosphate + CMP. Its pathway is isoprenoid biosynthesis; isopentenyl diphosphate biosynthesis via DXP pathway; isopentenyl diphosphate from 1-deoxy-D-xylulose 5-phosphate: step 2/6. It functions in the pathway isoprenoid biosynthesis; isopentenyl diphosphate biosynthesis via DXP pathway; isopentenyl diphosphate from 1-deoxy-D-xylulose 5-phosphate: step 4/6. Functionally, bifunctional enzyme that catalyzes the formation of 4-diphosphocytidyl-2-C-methyl-D-erythritol from CTP and 2-C-methyl-D-erythritol 4-phosphate (MEP) (IspD), and catalyzes the conversion of 4-diphosphocytidyl-2-C-methyl-D-erythritol 2-phosphate (CDP-ME2P) to 2-C-methyl-D-erythritol 2,4-cyclodiphosphate (ME-CPP) with a corresponding release of cytidine 5-monophosphate (CMP) (IspF). The chain is Bifunctional enzyme IspD/IspF from Caulobacter vibrioides (strain ATCC 19089 / CIP 103742 / CB 15) (Caulobacter crescentus).